Reading from the N-terminus, the 356-residue chain is Protein RecA (356 aa).

G75–T82 contacts ATP.

This sequence belongs to the RecA family.

It is found in the cytoplasm. Functionally, can catalyze the hydrolysis of ATP in the presence of single-stranded DNA, the ATP-dependent uptake of single-stranded DNA by duplex DNA, and the ATP-dependent hybridization of homologous single-stranded DNAs. It interacts with LexA causing its activation and leading to its autocatalytic cleavage. This Burkholderia mallei (strain ATCC 23344) protein is Protein RecA.